We begin with the raw amino-acid sequence, 36 residues long: Photosystem I reaction center subunit VIII (36 aa).

A helical membrane pass occupies residues 8-28 (SVLVPLVGLIFPAMAMASLFL).

Belongs to the PsaI family.

It is found in the plastid. The protein resides in the chloroplast thylakoid membrane. Functionally, may help in the organization of the PsaL subunit. This Daucus carota (Wild carrot) protein is Photosystem I reaction center subunit VIII.